The chain runs to 297 residues: Guanylate kinase (297 aa).

A Guanylate kinase-like domain is found at 4 to 183 (GKMIIISGPS…AVAKITDVLH (180 aa)). 11–18 (GPSGVGKG) is a binding site for ATP. The segment at 204–297 (EQIVKEKYMY…EQKHYNNDEF (94 aa)) is unknown.

This sequence belongs to the guanylate kinase family.

It localises to the cytoplasm. The enzyme catalyses GMP + ATP = GDP + ADP. Its function is as follows. Essential for recycling GMP and indirectly, cGMP. This is Guanylate kinase (gmk) from Mycoplasma capricolum subsp. capricolum (strain California kid / ATCC 27343 / NCTC 10154).